Consider the following 394-residue polypeptide: 1-deoxy-D-xylulose 5-phosphate reductoisomerase (394 aa).

Threonine 11, glycine 12, serine 13, isoleucine 14, glycine 37, asparagine 39, and asparagine 126 together coordinate NADPH. Lysine 127 lines the 1-deoxy-D-xylulose 5-phosphate pocket. NADPH is bound at residue glutamate 128. Residue aspartate 152 participates in Mn(2+) binding. Residues serine 153, glutamate 154, serine 178, and histidine 201 each coordinate 1-deoxy-D-xylulose 5-phosphate. Glutamate 154 is a Mn(2+) binding site. Glycine 207 serves as a coordination point for NADPH. The 1-deoxy-D-xylulose 5-phosphate site is built by serine 214, asparagine 219, lysine 220, and glutamate 223. Residue glutamate 223 participates in Mn(2+) binding.

This sequence belongs to the DXR family. Mg(2+) is required as a cofactor. It depends on Mn(2+) as a cofactor.

It catalyses the reaction 2-C-methyl-D-erythritol 4-phosphate + NADP(+) = 1-deoxy-D-xylulose 5-phosphate + NADPH + H(+). It participates in isoprenoid biosynthesis; isopentenyl diphosphate biosynthesis via DXP pathway; isopentenyl diphosphate from 1-deoxy-D-xylulose 5-phosphate: step 1/6. In terms of biological role, catalyzes the NADPH-dependent rearrangement and reduction of 1-deoxy-D-xylulose-5-phosphate (DXP) to 2-C-methyl-D-erythritol 4-phosphate (MEP). The polypeptide is 1-deoxy-D-xylulose 5-phosphate reductoisomerase (Synechocystis sp. (strain ATCC 27184 / PCC 6803 / Kazusa)).